The sequence spans 436 residues: Proteasome-activating nucleotidase (436 aa).

Positions 15 to 97 form a coiled coil; the sequence is EELCRLYRSL…LKSESEQLRS (83 aa). ATP is bound by residues 222-227 and histidine 361; that span reads GTGKTL. Positions 434-436 are docks into pockets in the proteasome alpha-ring to cause gate opening; sequence MFA.

This sequence belongs to the AAA ATPase family. As to quaternary structure, homohexamer. The hexameric complex has a two-ring architecture resembling a top hat that caps the 20S proteasome core at one or both ends. Upon ATP-binding, the C-terminus of PAN interacts with the alpha-rings of the proteasome core by binding to the intersubunit pockets.

Its subcellular location is the cytoplasm. Its function is as follows. ATPase which is responsible for recognizing, binding, unfolding and translocation of substrate proteins into the archaeal 20S proteasome core particle. Is essential for opening the gate of the 20S proteasome via an interaction with its C-terminus, thereby allowing substrate entry and access to the site of proteolysis. Thus, the C-termini of the proteasomal ATPase function like a 'key in a lock' to induce gate opening and therefore regulate proteolysis. Unfolding activity requires energy from ATP hydrolysis, whereas ATP binding alone promotes ATPase-20S proteasome association which triggers gate opening, and supports translocation of unfolded substrates. In Methanoregula boonei (strain DSM 21154 / JCM 14090 / 6A8), this protein is Proteasome-activating nucleotidase.